Reading from the N-terminus, the 557-residue chain is MAAQGFLLIATFLLVLMVLARPLGSGLARLINDIPLPGTTGVERVLFRALGVSDREMNWKQYLCAILGLNMLGLAVLFFMLLGQHYLPLNPQQLPGLSWDLALNTAVSFVTNTNWQSYSGETTLSYFSQMAGLTVQNFLSAASGIAVIFALIRAFTRQSMSTLGNAWVDLLRITLWVLVPVALLIALFFIQQGALQNFLPYQAVNTVEGAQQLLPMGPVASQEAIKMLGTNGGGFFNANSSHPFENPTALTNFVQMLAIFLIPTALCFAFGEVMGDRRQGRMLLWAMSVIFVICVGVVMWAEVQGNPHLLALGTDSSINMEGKESRFGVLVSSLFAVVTTAASCGAVIAMHDSFTALGGMVPMWLMQIGEVVFGGVGSGLYGMMLFVLLAVFIAGLMIGRTPEYLGKKIDVREMKLTALAILVTPTLVLMGAALAMMTDAGRSAMLNPGPHGFSEVLYAVSSAANNNGSAFAGLSANSPFWNCLLAFCMFVGRFGVIIPVMAIAGSLVSKKSQAASSGTLPTHGPLFVGLLIGTVLLVGALTFIPALALGPVAEYLS.

A run of 12 helical transmembrane segments spans residues 5-25 (GFLLIATFLLVLMVLARPLGS), 63-83 (LCAILGLNMLGLAVLFFMLLG), 132-152 (GLTVQNFLSAASGIAVIFALI), 170-190 (LLRITLWVLVPVALLIALFFI), 253-273 (FVQMLAIFLIPTALCFAFGEV), 283-303 (LLWAMSVIFVICVGVVMWAEV), 329-349 (VLVSSLFAVVTTAASCGAVIA), 356-376 (ALGGMVPMWLMQIGEVVFGGV), 379-399 (GLYGMMLFVLLAVFIAGLMIG), 416-436 (LTALAILVTPTLVLMGAALAM), 484-504 (LLAFCMFVGRFGVIIPVMAIA), and 526-546 (LFVGLLIGTVLLVGALTFIPA).

It belongs to the KdpA family. The system is composed of three essential subunits: KdpA, KdpB and KdpC.

The protein resides in the cell inner membrane. In terms of biological role, part of the high-affinity ATP-driven potassium transport (or Kdp) system, which catalyzes the hydrolysis of ATP coupled with the electrogenic transport of potassium into the cytoplasm. This subunit binds the periplasmic potassium ions and delivers the ions to the membrane domain of KdpB through an intramembrane tunnel. The chain is Potassium-transporting ATPase potassium-binding subunit from Escherichia coli (strain K12 / MC4100 / BW2952).